A 215-amino-acid polypeptide reads, in one-letter code: Cytokinin riboside 5'-monophosphate phosphoribohydrolase LOG3 (215 aa).

Residues Glu-84, 102–103 (RK), 119–125 (GYGTLEE), and Thr-131 contribute to the substrate site.

This sequence belongs to the LOG family. As to expression, expressed in roots and shoots. Detected in root procambium, lateral root primordia, vascular tissues of immature leaves, axillary buds, style and ovular funiculus.

It localises to the cytoplasm. The protein resides in the nucleus. The catalysed reaction is N(6)-(dimethylallyl)adenosine 5'-phosphate + H2O = N(6)-dimethylallyladenine + D-ribose 5-phosphate. It catalyses the reaction 9-ribosyl-trans-zeatin 5'-phosphate + H2O = trans-zeatin + D-ribose 5-phosphate. Functionally, cytokinin-activating enzyme working in the direct activation pathway. Phosphoribohydrolase that converts inactive cytokinin nucleotides to the biologically active free-base forms. This is Cytokinin riboside 5'-monophosphate phosphoribohydrolase LOG3 (LOG3) from Arabidopsis thaliana (Mouse-ear cress).